The chain runs to 633 residues: Phosphomethylpyrimidine synthase (633 aa).

Residues asparagine 245, methionine 274, tyrosine 303, histidine 339, 359 to 361 (SRG), 400 to 403 (DGLR), and glutamate 439 each bind substrate. A Zn(2+)-binding site is contributed by histidine 443. Tyrosine 466 is a binding site for substrate. Zn(2+) is bound at residue histidine 507. Positions 587, 590, and 595 each coordinate [4Fe-4S] cluster.

Belongs to the ThiC family. Homodimer. [4Fe-4S] cluster serves as cofactor.

It catalyses the reaction 5-amino-1-(5-phospho-beta-D-ribosyl)imidazole + S-adenosyl-L-methionine = 4-amino-2-methyl-5-(phosphooxymethyl)pyrimidine + CO + 5'-deoxyadenosine + formate + L-methionine + 3 H(+). It functions in the pathway cofactor biosynthesis; thiamine diphosphate biosynthesis. In terms of biological role, catalyzes the synthesis of the hydroxymethylpyrimidine phosphate (HMP-P) moiety of thiamine from aminoimidazole ribotide (AIR) in a radical S-adenosyl-L-methionine (SAM)-dependent reaction. The chain is Phosphomethylpyrimidine synthase from Neisseria meningitidis serogroup A / serotype 4A (strain DSM 15465 / Z2491).